The chain runs to 498 residues: MRINPTTSGPGVSTLEKKKSGRIAQIIGPVLDVTFPPGKMPNIYNALVVKGRDTGGQEINVTCEVQQLLGNNRVRAVAMSATDGLTRGMEVIDTGAPLSVPVGGATLGRIFNVLGEPVDELGPVDTRTTSPIHRSAPAFIQLDTKLSIFETGIKVVDLLAPYRRGGKIGLFGGAGVGKTVLIMELINNIAKAHGGVSVFGGVGERTREGNDLYMEMKESGVINEQNIAESKVALVYGQMNEPPGARMRVGLTALTMAEYFRDVNKQNVLLFIDNIFRFVQAGSEVSALLGRMPSAVGYQPTLSTEMGSLQERITSTKAGSITSIQAVYVPADDLTDPAPATTFAHLDATTVLSRGLAAKGIYPAVDPLDSTSTMLQPRIVGDEHYETAQRVKETLQRYKELQDIISILGLDELSEEDRLTVARARKIERFLSQPFFVAEVFTGSPGKYVGLAETIRGFKLILSGELDGLPEQAFYLVGTIDEATAKAANLEMESDLKK.

Residue 172–179 (GGAGVGKT) participates in ATP binding.

The protein belongs to the ATPase alpha/beta chains family. In terms of assembly, F-type ATPases have 2 components, CF(1) - the catalytic core - and CF(0) - the membrane proton channel. CF(1) has five subunits: alpha(3), beta(3), gamma(1), delta(1), epsilon(1). CF(0) has four main subunits: a(1), b(1), b'(1) and c(9-12).

The protein localises to the plastid. It localises to the chloroplast thylakoid membrane. It carries out the reaction ATP + H2O + 4 H(+)(in) = ADP + phosphate + 5 H(+)(out). Functionally, produces ATP from ADP in the presence of a proton gradient across the membrane. The catalytic sites are hosted primarily by the beta subunits. The polypeptide is ATP synthase subunit beta, chloroplastic (Oenothera biennis (German evening primrose)).